We begin with the raw amino-acid sequence, 2946 residues long: Neurobeachin (2946 aa).

Positions 971-995 (ENIKKGKKGNVSTISGLSSQTTGAK) are disordered. Over residues 980-993 (NVSTISGLSSQTTG) the composition is skewed to polar residues. A phosphoserine mark is found at Ser-1011 and Ser-1014. The WD 1 repeat unit spans residues 1326-1368 (TTMFRIPEFKWSPMHQRLLTDLLFALETDVHVWRSHSTKSVMD). 4 disordered regions span residues 1490-1531 (QRDR…LSPI), 1651-1675 (TIKE…HTDS), 1711-1731 (VKKS…PATS), and 1841-1860 (GAVD…VNGA). Over residues 1497-1517 (SSHGSSKPQEVPQSVTATAAS) the composition is skewed to polar residues. Ser-1529 is modified (phosphoserine). A phosphoserine mark is found at Ser-1714 and Ser-1717. Residues 1716 to 1731 (ESLTENPSETLKPATS) show a composition bias toward polar residues. Residues 1845–1855 (SGSSSSSSSSS) show a composition bias toward low complexity. At Ser-2138 the chain carries Phosphoserine. The BEACH-type PH domain occupies 2147–2255 (NLAGPVVLST…TVKKVVYSLP (109 aa)). The 290-residue stretch at 2274 to 2563 (ATPRQLYKSS…QLLIEPHPPR (290 aa)) folds into the BEACH domain. Ser-2575 bears the Phosphoserine mark. 4 WD repeats span residues 2718–2761 (GHWD…HIIG), 2778–2818 (GHDH…RALE), 2860–2899 (EIND…QLYI), and 2902–2941 (GCDA…WHYE).

Belongs to the WD repeat neurobeachin family. Interacts with RII subunit of PKA. In terms of tissue distribution, predominant in many brain structures. Also expressed at medium levels in spleen, thymus, prostate, testis and ovary. Low level expression is seen in heart, kidney, pancreas, skeletal muscle and intestine.

The protein resides in the cytoplasm. Its subcellular location is the membrane. Its function is as follows. Binds to type II regulatory subunits of protein kinase A and anchors/targets them to the membrane. May anchor the kinase to cytoskeletal and/or organelle-associated proteins. In Homo sapiens (Human), this protein is Neurobeachin.